Reading from the N-terminus, the 325-residue chain is Olfactory receptor 5T18 (325 aa).

The Extracellular segment spans residues 1 to 22 (MRNITEATFFVLKGLTDNNELQ). Asn-3 carries an N-linked (GlcNAc...) asparagine glycan. 2 helical membrane-spanning segments follow: residues 23–43 (IILF…NVGL) and 44–64 (IILV…LSVL). Over 65-97 (SSVDACYSTDITPNMLVGFMSKSKIISFYGCAT) the chain is Extracellular. The cysteines at positions 95 and 187 are disulfide-linked. A helical membrane pass occupies residues 98 to 118 (QMFLAVTFGTTECFLLAAMAY). At 119–139 (DRYVAIHDPLLYAVSMSPRVY) the chain is on the cytoplasmic side. The helical transmembrane segment at 140 to 160 (IPLIIASYAGGIVHAIIHTVA) threads the bilayer. Residues 161-194 (TFSLSFCRSNEVKHIFCDIPPLLAISCSETYVNE) lie on the Extracellular side of the membrane. Residues 195–215 (LLLFFFVSFIELVTILIVLVS) traverse the membrane as a helical segment. Residues 216 to 234 (YAFILLSILKMNSSEGRRK) are Cytoplasmic-facing. The helical transmembrane segment at 235-255 (VFSTCGAHLTAVSIYYGTILF) threads the bilayer. The Extracellular segment spans residues 256–269 (MYVRPSSNYSLEHD). Residues 270 to 290 (MIVSTFYTIGIPMLNPIIYSL) traverse the membrane as a helical segment. At 291 to 325 (RNKDVKEAMKRVLRKKINIKHRIKKLNDFSVFLMP) the chain is on the cytoplasmic side.

Belongs to the G-protein coupled receptor 1 family.

The protein resides in the cell membrane. Its function is as follows. Potential odorant receptor. The protein is Olfactory receptor 5T18 of Mus musculus (Mouse).